The primary structure comprises 4538 residues: Polyketide synthase PksL (4538 aa).

Residues 1–123 (MRWRSNVKKI…ADMHADSPAI (123 aa)) form an N-terminal hotdog fold 1 region. The PKS/mFAS DH 1 domain maps to 1-285 (MRWRSNVKKI…SKLVREAELI (285 aa)). The Proton acceptor; for dehydratase activity 1 role is filled by H26. The segment at 138 to 285 (QNVVQLDDVY…SKLVREAELI (148 aa)) is C-terminal hotdog fold 1. The active-site Proton donor; for dehydratase activity 1 is D199. A disordered region spans residues 289–314 (HQDAQETQMTRADTAERDKPADMVSS). Residues 320–394 (SEAEQFVSQL…ELSAFLAEEY (75 aa)) enclose the Carrier 1 domain. An O-(pantetheine 4'-phosphoryl)serine modification is found at S354. Residues 433 to 871 (AGDIAIIGLA…GSNAHIILEE (439 aa)) form the Ketosynthase family 3 (KS3) 1 domain. Active-site for beta-ketoacyl synthase 1 activity residues include C609, H744, and H784. The interval 1048–1226 (HILHPLLHQN…DSLYAGENGV (179 aa)) is dehydratase. Positions 1051-1175 (HPLLHQNVSD…GSAVLCEAGE (125 aa)) are N-terminal hotdog fold 2. A PKS/mFAS DH 2 domain is found at 1051-1340 (HPLLHQNVSD…ARVLETDQEG (290 aa)). The active-site Proton acceptor; for dehydratase activity 2 is H1080. The tract at residues 1189 to 1340 (NGRTLSPFDC…ARVLETDQEG (152 aa)) is C-terminal hotdog fold 2. Catalysis depends on D1251, which acts as the Proton donor; for dehydratase activity 2. Residues 1520–1713 (KGVYLITGGA…WKDGGMQIDA (194 aa)) form a beta-ketoacyl reductase 1 region. Residues 1800–1873 (EKAENYFKQV…SLTRYFIDSR (74 aa)) enclose the Carrier 2 domain. S1834 is subject to O-(pantetheine 4'-phosphoryl)serine. The Ketosynthase family 3 (KS3) 2 domain occupies 1926–2365 (TEEIAIIGIS…GVNAHILIEE (440 aa)). Catalysis depends on for beta-ketoacyl synthase 2 activity residues C2103, H2238, and H2278. The disordered stretch occupies residues 2546 to 2568 (TEEPFAPVQPVIPKPSVDREASG). 2 Carrier domains span residues 2597-2674 (ITAE…AHEL) and 2738-2815 (VAIE…KSEL). O-(pantetheine 4'-phosphoryl)serine is present on residues S2634 and S2775. Positions 2828–2854 (SFEAAQQKPAASSHPKPAERPLQPVQH) are disordered. Residues 2873-3294 (EDAIAIVGMS…GTNAHIVIEE (422 aa)) form the Ketosynthase family 3 (KS3) 3 domain. Catalysis depends on for beta-ketoacyl synthase 3 activity residues C3040, H3175, and H3215. Residues 3686–3887 (DKVLLITGGT…PNWKETGLGE (202 aa)) are beta-ketoacyl reductase 2. The Carrier 5 domain maps to 3960-4037 (NLFPETVDWL…SFAHWLISKY (78 aa)). At S3997 the chain carries O-(pantetheine 4'-phosphoryl)serine. The Ketosynthase family 3 (KS3) 4 domain occupies 4082–4485 (AEDIAIIGLS…GTNAHLIIEG (404 aa)). C4237 functions as the For beta-ketoacyl synthase 4 activity in the catalytic mechanism.

Pantetheine 4'-phosphate serves as cofactor.

Its subcellular location is the cytoplasm. The protein operates within antibiotic biosynthesis; bacillaene biosynthesis. In terms of biological role, involved in some intermediate steps for the synthesis of the antibiotic polyketide bacillaene which is involved in secondary metabolism. This is Polyketide synthase PksL (pksL) from Bacillus subtilis (strain 168).